The chain runs to 131 residues: Outer membrane protein assembly factor BamE (131 aa).

An N-terminal signal peptide occupies residues 1-16 (MRNLLLVAAVALSTAG). The N-palmitoyl cysteine moiety is linked to residue C17. C17 carries S-diacylglycerol cysteine lipidation. Residues 112 to 131 (SAPKQFGRNLARDKKKQRGR) form a disordered region.

Belongs to the BamE family. Part of the Bam complex.

It is found in the cell outer membrane. Part of the outer membrane protein assembly complex, which is involved in assembly and insertion of beta-barrel proteins into the outer membrane. This chain is Outer membrane protein assembly factor BamE, found in Xanthomonas campestris pv. campestris (strain ATCC 33913 / DSM 3586 / NCPPB 528 / LMG 568 / P 25).